The primary structure comprises 64 residues: Large ribosomal subunit protein uL29 (64 aa).

It belongs to the universal ribosomal protein uL29 family.

The protein is Large ribosomal subunit protein uL29 of Legionella pneumophila (strain Lens).